Reading from the N-terminus, the 355-residue chain is UPF0421 protein BALH_2468 (355 aa).

4 helical membrane passes run I19–V39, F74–V94, T109–I129, and L131–P151.

This sequence belongs to the UPF0421 family.

The protein localises to the cell membrane. This chain is UPF0421 protein BALH_2468, found in Bacillus thuringiensis (strain Al Hakam).